A 381-amino-acid polypeptide reads, in one-letter code: Queuine tRNA-ribosyltransferase (381 aa).

The Proton acceptor role is filled by Asp-96. Residues Asp-96–Phe-100, Asp-150, Gln-193, and Gly-220 each bind substrate. Residues Gly-251–Ser-257 form an RNA binding region. The Nucleophile role is filled by Asp-270. Positions Thr-275–Arg-279 are RNA binding; important for wobble base 34 recognition. Zn(2+) is bound by residues Cys-308, Cys-310, Cys-313, and His-339.

Belongs to the queuine tRNA-ribosyltransferase family. As to quaternary structure, homodimer. Within each dimer, one monomer is responsible for RNA recognition and catalysis, while the other monomer binds to the replacement base PreQ1. Zn(2+) serves as cofactor.

It carries out the reaction 7-aminomethyl-7-carbaguanine + guanosine(34) in tRNA = 7-aminomethyl-7-carbaguanosine(34) in tRNA + guanine. It functions in the pathway tRNA modification; tRNA-queuosine biosynthesis. Its function is as follows. Catalyzes the base-exchange of a guanine (G) residue with the queuine precursor 7-aminomethyl-7-deazaguanine (PreQ1) at position 34 (anticodon wobble position) in tRNAs with GU(N) anticodons (tRNA-Asp, -Asn, -His and -Tyr). Catalysis occurs through a double-displacement mechanism. The nucleophile active site attacks the C1' of nucleotide 34 to detach the guanine base from the RNA, forming a covalent enzyme-RNA intermediate. The proton acceptor active site deprotonates the incoming PreQ1, allowing a nucleophilic attack on the C1' of the ribose to form the product. After dissociation, two additional enzymatic reactions on the tRNA convert PreQ1 to queuine (Q), resulting in the hypermodified nucleoside queuosine (7-(((4,5-cis-dihydroxy-2-cyclopenten-1-yl)amino)methyl)-7-deazaguanosine). The chain is Queuine tRNA-ribosyltransferase from Lysinibacillus sphaericus (strain C3-41).